Consider the following 881-residue polypeptide: MSQEEAESSIIYEEPIDIPLEDDDDEDELEEENSVPLSSQADQENAENESDDSVDNVVGSETPRSVTGLSVDPRDVADEEDEDEEGEDEDEDEDDNDVDNEDENDNDNANENENELGSSRDKRAPPAVQTSKRYKKYPKLDPAKAPPGKKVPLHLLEKRRLGRIKAAEEFAKTLKKIGIEKVETTTLPATGLFQPLMLINQKNYSSDYLKKDDQIFALRDRKFLRNNNTSQISSTNTPDVIDLKSLPHSEASAAPLNDEIDLNDPTATIVIHPGSNSIKIGFPKDDHPVVVPNCVAVPKKWLDLENSEHVENVCLQREQSEEFNNIKSEMEKNFRERMRYYKRKVPGNAHEQVVSFNENSKPEIISEKNDPSPIEWIFDDSKLYYGSDALRCVDEKFVIRKPFRGGSFNVKSPYYKSLAELISDVTKLLEHALNSETLNVKPTKFNQYKVVLVIPDIFKKSHVETFIRVLLTELQFQAVAIIQESLATCYGAGISTSTCVVNIGAAETRIACVDEGTVLEHSAITLDYGGDDITRLFALFLLQSDFPLQDWKIDSKHGWLLAERLKKNFTTFQDADVAVQLYNFMNRSPNQPTEKYEFKLFDEVMLAPLALFFPQIFKLIRTSSHKNSSLEFQLPESRDLFTNELNDWNSLSQFESKEGNLYCDLNDDLKILNRILDAHNIIDQLQDKPENYGNTLKENFAPLEKAIVQSIANASITADVTRMNSFYSNILIVGGSSKIPALDFILTDRINIWRPSLLSSASFPQFYKKLTKEIKDLEGHYVNAPDKTEDENKQILQAQIKEKIVEELEEQHQNIEHQNGNEHIFPVSIIPPPRDMNPALIIWKGASVLAQIKLVEELFITNSDWDVHGSRILQYKCIFTY.

The interval 1–150 is disordered; the sequence is MSQEEAESSI…DPAKAPPGKK (150 aa). 2 stretches are compositionally biased toward acidic residues: residues 14–33 and 44–54; these read EPIDIPLEDDDDEDELEEEN and ENAENESDDSV. 2 positions are modified to phosphoserine: Ser-65 and Ser-70. Positions 77–114 are enriched in acidic residues; that stretch reads ADEEDEDEEGEDEDEDEDDNDVDNEDENDNDNANENEN. 502 to 505 contributes to the ATP binding site; the sequence is NIGA.

Belongs to the actin family. Component of the chromatin-remodeling INO80 complex, at least composed of ARP4, ARP5, ARP8, RVB1, RVB2, TAF14, NHP10, IES1, IES3, IES4, IES6, ACT1, IES2, IES5 and INO80. Exists as monomers and dimers, but the dimer is most probably the biologically relevant form required for stable interactions with histones that exploits the twofold symmetry of the nucleosome core.

The protein resides in the nucleus. It localises to the cytoplasm. Its subcellular location is the cytoskeleton. In terms of biological role, probably involved in transcription regulation via its interaction with the INO80 complex, a chromatin remodeling complex. Exhibits low basal ATPase activity, and unable to polymerize. Strongly prefer nucleosomes and H3-H4 tetramers over H2A-H2B dimers, suggesting it may act as a nucleosome recognition module within the complex. The polypeptide is Actin-like protein ARP8 (ARP8) (Saccharomyces cerevisiae (strain ATCC 204508 / S288c) (Baker's yeast)).